The following is a 334-amino-acid chain: Glyceraldehyde-3-phosphate dehydrogenase (334 aa).

NAD(+) contacts are provided by residues 12–13 (TI) and Gly111. 140–142 (SCN) lines the D-glyceraldehyde 3-phosphate pocket. The Nucleophile role is filled by Cys141. An NAD(+)-binding site is contributed by Arg167. A D-glyceraldehyde 3-phosphate-binding site is contributed by 192-193 (HG). Gln298 lines the NAD(+) pocket.

This sequence belongs to the glyceraldehyde-3-phosphate dehydrogenase family. Homotetramer.

The protein localises to the cytoplasm. It catalyses the reaction D-glyceraldehyde 3-phosphate + phosphate + NADP(+) = (2R)-3-phospho-glyceroyl phosphate + NADPH + H(+). The enzyme catalyses D-glyceraldehyde 3-phosphate + phosphate + NAD(+) = (2R)-3-phospho-glyceroyl phosphate + NADH + H(+). The protein operates within carbohydrate degradation; glycolysis; pyruvate from D-glyceraldehyde 3-phosphate: step 1/5. This Pyrococcus abyssi (strain GE5 / Orsay) protein is Glyceraldehyde-3-phosphate dehydrogenase (gap).